A 253-amino-acid polypeptide reads, in one-letter code: MRVDGRAHDQLRPVTITRNYIKHAEGSCLIEVGDTKVICTATLEERVPPFMRGGGKGWITAEYSMLPRATATRNARESSKGKVGGRTMEIQRLIGRALRSVVNLEAMGERTIWLDCDVIQADGGTRTASITGAFVAMVDAMQKLVDSGTWKQLPLNDFLAATSVGVVGEEAVLDLNYKEDSTAIVDMNVVMTGKGKFVELQGTGEDAPFSPEQLQEMISLAKVGIDNLIHSQKEALADVTLSFAQSVAEESHA.

Phosphate contacts are provided by residues R86 and 124–126 (GTR).

This sequence belongs to the RNase PH family. As to quaternary structure, homohexameric ring arranged as a trimer of dimers.

The catalysed reaction is tRNA(n+1) + phosphate = tRNA(n) + a ribonucleoside 5'-diphosphate. Phosphorolytic 3'-5' exoribonuclease that plays an important role in tRNA 3'-end maturation. Removes nucleotide residues following the 3'-CCA terminus of tRNAs; can also add nucleotides to the ends of RNA molecules by using nucleoside diphosphates as substrates, but this may not be physiologically important. Probably plays a role in initiation of 16S rRNA degradation (leading to ribosome degradation) during starvation. The sequence is that of Ribonuclease PH from Brevibacillus brevis (strain 47 / JCM 6285 / NBRC 100599).